The sequence spans 239 residues: Ribonuclease 3 (239 aa).

In terms of domain architecture, RNase III spans 11–133 (HAAIQKKLGY…MFAAVSFDAD (123 aa)). Mg(2+) is bound at residue glutamate 46. Aspartate 50 is an active-site residue. The Mg(2+) site is built by aspartate 119 and glutamate 122. Residues 160–230 (DGKTALQEAL…AKEALKWLEE (71 aa)) form the DRBM domain.

The protein belongs to the ribonuclease III family. Homodimer. It depends on Mg(2+) as a cofactor.

The protein resides in the cytoplasm. The enzyme catalyses Endonucleolytic cleavage to 5'-phosphomonoester.. Functionally, digests double-stranded RNA. Involved in the processing of primary rRNA transcript to yield the immediate precursors to the large and small rRNAs (23S and 16S). Also processes some mRNAs, and tRNAs when they are encoded in the rRNA operon. CRISPR (clustered regularly interspaced short palindromic repeat) is an adaptive immune system that provides protection against mobile genetic elements (viruses, transposable elements and conjugative plasmids). CRISPR clusters contain spacers, sequences complementary to antecedent mobile elements, and target invading nucleic acids. CRISPR clusters are transcribed and processed into CRISPR RNA (crRNA). In this organism endogenous ribonuclease 3 and Cas9 are required for correct coprocessing of pre-crRNA and the trans-encoded small RNA (tracrRNA). Cas9, crRNA and tracRNA are required for cleavage of invading DNA. Involved in 3'-end processing but not 5'-end processing of crRNA and tracrRNA. The chain is Ribonuclease 3 from Neisseria meningitidis serogroup C (strain 8013).